The chain runs to 187 residues: Thioredoxin F, chloroplastic (187 aa).

A chloroplast-targeting transit peptide spans 1 to 72 (MALRLSVSSS…GSDTATVGAE (72 aa)). The region spanning 73–186 (AEAVAVTGQV…LIQAIETVKS (114 aa)) is the Thioredoxin domain. Residues Cys-111 and Cys-114 each act as nucleophile in the active site. A disulfide bridge connects residues Cys-111 and Cys-114.

The protein belongs to the thioredoxin family. Plant F-type subfamily.

The protein resides in the plastid. It localises to the chloroplast. In terms of biological role, thiol-disulfide oxidoreductase involved in the redox regulation of enzymes of both reductive pentose phosphate pathway (Calvin-Benson cycle) and oxidative pentose phosphate pathway. The protein is Thioredoxin F, chloroplastic of Oryza sativa subsp. japonica (Rice).